The chain runs to 506 residues: Fe(3+)-transport system permease protein FbpB 2 (506 aa).

The next 12 membrane-spanning stretches (helical) occupy residues 9 to 29 (LTLL…YVIL), 57 to 77 (LLMV…AFLL), 90 to 110 (VAMT…WISL), 116 to 136 (VFWG…YLPV), 174 to 194 (IGSS…AVSI), 218 to 238 (ALLS…EIFF), 275 to 295 (IFIL…IVGT), 314 to 334 (FIIS…LVWA), 350 to 370 (PYLL…YFSI), 379 to 399 (TFFV…QTTL), 428 to 448 (LTLP…FLNL), and 480 to 500 (AAAT…VFLL). The region spanning 52–233 (LSNTMLLMVC…LMAICILIVF (182 aa)) is the ABC transmembrane type-1 1 domain. Positions 310-500 (FSNSFIISGL…LFSGIPVFLL (191 aa)) constitute an ABC transmembrane type-1 2 domain.

This sequence belongs to the binding-protein-dependent transport system permease family. FbpB subfamily. In terms of assembly, the complex is composed of two ATP-binding proteins (FbpC), two transmembrane proteins (FbpB) and a solute-binding protein (FbpA).

It localises to the cell inner membrane. In terms of biological role, part of the ABC transporter complex FbpABC (TC 3.A.1.10.1) involved in Fe(3+) ions import. Probably responsible for the translocation of the substrate across the membrane. The polypeptide is Fe(3+)-transport system permease protein FbpB 2 (fbpB2) (Haemophilus influenzae (strain ATCC 51907 / DSM 11121 / KW20 / Rd)).